The chain runs to 161 residues: RNA pyrophosphohydrolase (161 aa).

Positions 12–154 (PYRPGVGMMI…KRKLYQAVVK (143 aa)) constitute a Nudix hydrolase domain. A Nudix box motif is present at residues 46 to 67 (GGIVPGETPSIAAMREMLEEIG).

This sequence belongs to the Nudix hydrolase family. RppH subfamily. A divalent metal cation serves as cofactor.

Functionally, accelerates the degradation of transcripts by removing pyrophosphate from the 5'-end of triphosphorylated RNA, leading to a more labile monophosphorylated state that can stimulate subsequent ribonuclease cleavage. This Rickettsia canadensis (strain McKiel) protein is RNA pyrophosphohydrolase.